A 108-amino-acid polypeptide reads, in one-letter code: UPF0145 protein SYNPCC7002_A1337 (108 aa).

Belongs to the UPF0145 family.

In Picosynechococcus sp. (strain ATCC 27264 / PCC 7002 / PR-6) (Agmenellum quadruplicatum), this protein is UPF0145 protein SYNPCC7002_A1337.